The chain runs to 271 residues: Cytochrome b termination protein 1 (271 aa).

The protein resides in the mitochondrion. Its function is as follows. Involved in 5'-end processing of mitochondrial COB, 15S rRNA, and RPM1 transcript. May also have a role in 3'-end processing of the COB pre-mRNA. In Saccharomyces cerevisiae (strain ATCC 204508 / S288c) (Baker's yeast), this protein is Cytochrome b termination protein 1 (CBT1).